Consider the following 124-residue polypeptide: Large ribosomal subunit protein uL18 (124 aa).

It belongs to the universal ribosomal protein uL18 family. In terms of assembly, part of the 50S ribosomal subunit; part of the 5S rRNA/L5/L18/L25 subcomplex. Contacts the 5S and 23S rRNAs.

Functionally, this is one of the proteins that bind and probably mediate the attachment of the 5S RNA into the large ribosomal subunit, where it forms part of the central protuberance. The protein is Large ribosomal subunit protein uL18 of Orientia tsutsugamushi (strain Ikeda) (Rickettsia tsutsugamushi).